Reading from the N-terminus, the 494-residue chain is 3-octaprenyl-4-hydroxybenzoate carboxy-lyase (494 aa).

Residue N172 coordinates Mn(2+). Prenylated FMN is bound by residues 175–177 (IYR), 189–191 (RWL), and 194–195 (RG). E238 is a binding site for Mn(2+). The Proton donor role is filled by D287.

It belongs to the UbiD family. Homohexamer. The cofactor is prenylated FMN. It depends on Mn(2+) as a cofactor.

Its subcellular location is the cell membrane. The enzyme catalyses a 4-hydroxy-3-(all-trans-polyprenyl)benzoate + H(+) = a 2-(all-trans-polyprenyl)phenol + CO2. It functions in the pathway cofactor biosynthesis; ubiquinone biosynthesis. Catalyzes the decarboxylation of 3-octaprenyl-4-hydroxy benzoate to 2-octaprenylphenol, an intermediate step in ubiquinone biosynthesis. This Cronobacter sakazakii (strain ATCC BAA-894) (Enterobacter sakazakii) protein is 3-octaprenyl-4-hydroxybenzoate carboxy-lyase.